The following is an 800-amino-acid chain: Isoamylase 2, chloroplastic (800 aa).

A compositionally biased stretch (pro residues) spans 1–10; the sequence is MASLPAPPTP. The tract at residues 1 to 22 is disordered; it reads MASLPAPPTPLGSCPRGRGGGR. The N-terminal 34 residues, 1–34, are a transit peptide targeting the chloroplast; that stretch reads MASLPAPPTPLGSCPRGRGGGRVVARPRRAGLAC.

It belongs to the glycosyl hydrolase 13 family. As to quaternary structure, forms a hetero-hexamer composed of five ISA1 and one ISA2. As to expression, highly expressed in developing endosperm and leaves.

The protein resides in the plastid. Its subcellular location is the chloroplast. It catalyses the reaction Hydrolysis of (1-&gt;6)-alpha-D-glucosidic branch linkages in glycogen, amylopectin and their beta-limit dextrins.. Starch-debranching enzyme involved in amylopectin biosynthesis in endosperm. Functions by removing excess branches or improper branches that interfere with the formation of double helices of the cluster chains of amylopectin and crystallization of starch. Works together with ISA1 as heterooligomer. The heterooligomer ISA1 and ISA2 possesses higher affinity than the ISA1 homooligomer for various branched polyglucans in vitro, but no marked differences exist in chain preferences for debranching of amylopectin and phytoglycogen between these forms. The sequence is that of Isoamylase 2, chloroplastic from Oryza sativa subsp. japonica (Rice).